Consider the following 569-residue polypeptide: MLGTLGLWALLPAAVQAPPNRRTCVFFEAPGVRGSTKTLGELLDAGPGPPRVIRCLYSRCCFGIWNLTRDQAQVEMQGCRDSDEPGCESLSCDPSPRARASSGSTLFTCSCGADFCNANYSHLPPLGGPGTPGPQGPQAAPGESPWMALALLGLVLLLLLLLGGIVVALLQRKAYRVQSGPEPEPDSGRDCSEELPELPQLCFSQVIREGGHAAVWAGQLQGELVAIKVFPRRAVAQFRAERALYELPGLQHNHVVRFIAAGQGGPGPLPSGPLLVLELHPKGSLCQYLSQHTSDWGSSLRMALSLAQGLAFLHEERWQDGQYKPGIAHRDLSSQNVLIREDGSCAIGDLGLALVLPGFAQPRAWAPPQPRGPAAIMEAGTQRYMAPELLDKSLDLQDWGTALRRADVYSLALLLWEILSRCPDLRPDGRPPPFQLAYEAELGSAPTTCELWALAVEERRRPDIPSSWCCFATDPGGLRELLEDCWDADPEARLTAECVQQRLVALVHPQEAQPCPEGRPHSHPEDWPPAPAPAPALLPGSPQPGACHFGVQQGLCSRNPGAACASSDV.

A signal peptide spans 1–17 (MLGTLGLWALLPAAVQA). Topologically, residues 18-148 (PPNRRTCVFF…AAPGESPWMA (131 aa)) are extracellular. 2 disulfides stabilise this stretch: C55-C79 and C92-C109. N66 carries an N-linked (GlcNAc...) asparagine glycan. An N-linked (GlcNAc...) asparagine glycan is attached at N119. Residues 149-169 (LALLGLVLLLLLLLGGIVVAL) traverse the membrane as a helical segment. Topologically, residues 170 to 569 (LQRKAYRVQS…PGAACASSDV (400 aa)) are cytoplasmic. The Protein kinase domain occupies 201 to 511 (LCFSQVIREG…RLVALVHPQE (311 aa)). Residues 207–215 (IREGGHAAV) and K228 each bind ATP. D331 functions as the Proton acceptor in the catalytic mechanism. The disordered stretch occupies residues 512–535 (AQPCPEGRPHSHPEDWPPAPAPAP).

Belongs to the protein kinase superfamily. TKL Ser/Thr protein kinase family. TGFB receptor subfamily. As to quaternary structure, interacts with type I receptor ACVR1. Requires Mg(2+) as cofactor. The cofactor is Mn(2+).

The protein resides in the membrane. It catalyses the reaction L-threonyl-[receptor-protein] + ATP = O-phospho-L-threonyl-[receptor-protein] + ADP + H(+). The enzyme catalyses L-seryl-[receptor-protein] + ATP = O-phospho-L-seryl-[receptor-protein] + ADP + H(+). Functionally, on ligand binding, forms a receptor complex consisting of two type II and two type I transmembrane serine/threonine kinases. Type II receptors phosphorylate and activate type I receptors which autophosphorylate, then bind and activate SMAD transcriptional regulators. Receptor for anti-Muellerian hormone. The sequence is that of Anti-Muellerian hormone type-2 receptor (AMHR2) from Oryctolagus cuniculus (Rabbit).